Here is a 391-residue protein sequence, read N- to C-terminus: 3-ketoacyl-CoA thiolase (391 aa).

The active-site Acyl-thioester intermediate is cysteine 95. Catalysis depends on proton acceptor residues histidine 347 and cysteine 377.

The protein belongs to the thiolase-like superfamily. Thiolase family. Heterotetramer of two alpha chains (FadB) and two beta chains (FadA).

It is found in the cytoplasm. It catalyses the reaction an acyl-CoA + acetyl-CoA = a 3-oxoacyl-CoA + CoA. The protein operates within lipid metabolism; fatty acid beta-oxidation. Its function is as follows. Catalyzes the final step of fatty acid oxidation in which acetyl-CoA is released and the CoA ester of a fatty acid two carbons shorter is formed. The protein is 3-ketoacyl-CoA thiolase of Alcanivorax borkumensis (strain ATCC 700651 / DSM 11573 / NCIMB 13689 / SK2).